Consider the following 473-residue polypeptide: Protein TED1 (473 aa).

Residues 1–8 are Cytoplasmic-facing; the sequence is MLRCAVKK. A helical transmembrane segment spans residues 9-29; the sequence is FAYFATFLTIVANIYIYTYPS. Topologically, residues 30-451 are lumenal; that stretch reads FHPEQCSWNC…FSLCPFAIQH (422 aa). N-linked (GlcNAc...) asparagine glycosylation is found at Asn38, Asn147, Asn229, Asn266, and Asn307. Residues 452–472 traverse the membrane as a helical segment; it reads VWWFAKVSLLVTIFTWSSLLF. Val473 is a topological domain (cytoplasmic).

N-glycosylated.

Its subcellular location is the endoplasmic reticulum membrane. In terms of biological role, acts together with EMP24 and ERV25 in cargo exit from the endoplasmic reticulum. In Saccharomyces cerevisiae (strain ATCC 204508 / S288c) (Baker's yeast), this protein is Protein TED1 (TED1).